The primary structure comprises 969 residues: Dual serine/threonine and tyrosine protein kinase (969 aa).

The stretch at 7 to 37 (QEFRRYLRNRNQLQHVLEETQQALELINLEN) forms a coiled coil. One can recognise a Protein kinase domain in the interval 632 to 894 (PHCAEEIGRG…PLLGAIVPVL (263 aa)). Residues 638–646 (IGRGQYGIV) and Lys-662 contribute to the ATP site. Asp-760 (proton acceptor) is an active-site residue. The segment at 904 to 945 (SKSLQEVSSDKLQESSTDSRNPALALAEPYNQRGTVVSPPPT) is disordered.

This sequence belongs to the protein kinase superfamily. Ser/Thr protein kinase family.

The protein resides in the cytoplasm. It carries out the reaction L-seryl-[protein] + ATP = O-phospho-L-seryl-[protein] + ADP + H(+). The enzyme catalyses L-threonyl-[protein] + ATP = O-phospho-L-threonyl-[protein] + ADP + H(+). The catalysed reaction is L-tyrosyl-[protein] + ATP = O-phospho-L-tyrosyl-[protein] + ADP + H(+). The chain is Dual serine/threonine and tyrosine protein kinase from Apis mellifera (Honeybee).